A 309-amino-acid chain; its full sequence is tRNA pseudouridine synthase B (309 aa).

The active-site Nucleophile is the D39.

Belongs to the pseudouridine synthase TruB family. Type 1 subfamily.

The catalysed reaction is uridine(55) in tRNA = pseudouridine(55) in tRNA. In terms of biological role, responsible for synthesis of pseudouridine from uracil-55 in the psi GC loop of transfer RNAs. This Bacillus velezensis (strain DSM 23117 / BGSC 10A6 / LMG 26770 / FZB42) (Bacillus amyloliquefaciens subsp. plantarum) protein is tRNA pseudouridine synthase B.